A 312-amino-acid polypeptide reads, in one-letter code: DNA-directed RNA polymerase subunit alpha (312 aa).

Residues 1-226 (MIEFEKPTIT…EHLGLFTDLT (226 aa)) form an alpha N-terminal domain (alpha-NTD) region. The segment at 242-312 (SDDRMLDRTI…DLGLGLKKDK (71 aa)) is alpha C-terminal domain (alpha-CTD).

This sequence belongs to the RNA polymerase alpha chain family. Homodimer. The RNAP catalytic core consists of 2 alpha, 1 beta, 1 beta' and 1 omega subunit. When a sigma factor is associated with the core the holoenzyme is formed, which can initiate transcription.

It catalyses the reaction RNA(n) + a ribonucleoside 5'-triphosphate = RNA(n+1) + diphosphate. Its function is as follows. DNA-dependent RNA polymerase catalyzes the transcription of DNA into RNA using the four ribonucleoside triphosphates as substrates. This Streptococcus suis (strain 98HAH33) protein is DNA-directed RNA polymerase subunit alpha.